The chain runs to 150 residues: Lipoprotein signal peptidase (150 aa).

3 helical membrane passes run 5–25, 59–79, and 82–102; these read LSLVIIVVGIIADQVFKNWVV, QQWFFLVLTPIVLIVALWFLW, and MGQNWYFAGLTLIIAGALGNF. Catalysis depends on residues D113 and D129. A helical transmembrane segment spans residues 124–144; the sequence is IFNIADILLSVGFVVLFIAIL.

Belongs to the peptidase A8 family.

The protein resides in the cell membrane. It catalyses the reaction Release of signal peptides from bacterial membrane prolipoproteins. Hydrolyzes -Xaa-Yaa-Zaa-|-(S,diacylglyceryl)Cys-, in which Xaa is hydrophobic (preferably Leu), and Yaa (Ala or Ser) and Zaa (Gly or Ala) have small, neutral side chains.. It functions in the pathway protein modification; lipoprotein biosynthesis (signal peptide cleavage). Functionally, this protein specifically catalyzes the removal of signal peptides from prolipoproteins. This Lactococcus lactis subsp. cremoris (strain SK11) protein is Lipoprotein signal peptidase.